Consider the following 246-residue polypeptide: Probable transcriptional regulatory protein CKO_01097 (246 aa).

The segment at 1–20 (MAGHSKWANTRHRKAAQDAK) is disordered.

It belongs to the TACO1 family.

The protein localises to the cytoplasm. In Citrobacter koseri (strain ATCC BAA-895 / CDC 4225-83 / SGSC4696), this protein is Probable transcriptional regulatory protein CKO_01097.